A 173-amino-acid chain; its full sequence is Transcription factor E (173 aa).

One can recognise an HTH TFE/IIEalpha-type domain in the interval 6-89; the sequence is PLEELLEFVR…YWYVDRETLN (84 aa).

It belongs to the TFE family. Monomer. Interaction with RNA polymerase subunits RpoF and RpoE is necessary for Tfe stimulatory transcription activity. Able to interact with Tbp and RNA polymerase in the absence of DNA promoter. Interacts both with the preinitiation and elongation complexes.

Transcription factor that plays a role in the activation of archaeal genes transcribed by RNA polymerase. Facilitates transcription initiation by enhancing TATA-box recognition by TATA-box-binding protein (Tbp), and transcription factor B (Tfb) and RNA polymerase recruitment. Not absolutely required for transcription in vitro, but particularly important in cases where Tbp or Tfb function is not optimal. It dynamically alters the nucleic acid-binding properties of RNA polymerases by stabilizing the initiation complex and destabilizing elongation complexes. Seems to translocate with the RNA polymerase following initiation and acts by binding to the non template strand of the transcription bubble in elongation complexes. This is Transcription factor E from Ignicoccus hospitalis (strain KIN4/I / DSM 18386 / JCM 14125).